The chain runs to 69 residues: MAKIKGQVKWFNESKGFGFITPADGSKDVFVHFSAIQGNGLKTLAEGQNVEFEIQDGQKGPAAVNVTAI.

The CSD domain occupies 6–66 (GQVKWFNESK…GQKGPAAVNV (61 aa)).

It localises to the cytoplasm. In Shigella flexneri, this protein is Cold shock-like protein CspC (cspC).